The following is a 372-amino-acid chain: Glutamate 5-kinase (372 aa).

Residue Lys14 participates in ATP binding. The substrate site is built by Ser54, Asp141, and Asn153. Position 173–174 (173–174 (TD)) interacts with ATP. The PUA domain maps to 280 to 358 (RGHVVIDDGA…GEIESVLGYM (79 aa)).

It belongs to the glutamate 5-kinase family.

It localises to the cytoplasm. The enzyme catalyses L-glutamate + ATP = L-glutamyl 5-phosphate + ADP. It participates in amino-acid biosynthesis; L-proline biosynthesis; L-glutamate 5-semialdehyde from L-glutamate: step 1/2. In terms of biological role, catalyzes the transfer of a phosphate group to glutamate to form L-glutamate 5-phosphate. This Paraburkholderia xenovorans (strain LB400) protein is Glutamate 5-kinase.